Consider the following 494-residue polypeptide: Smoothelin-like protein 1 (494 aa).

Composition is skewed to basic and acidic residues over residues 1-10 (MEQKEGKLSE), 74-104 (DEVK…KEET), 112-166 (TGRK…KATV), and 179-232 (TGQR…KEEA). The segment at 1–348 (MEQKEGKLSE…ARPRGPRAQN (348 aa)) is disordered. The stretch at 123-145 (KEAEEKESTLASEKQKAEEKEAK) forms a coiled coil. Residues 233–255 (DAKEEAEDAEEAEPGSPSEEQEQ) show a composition bias toward acidic residues. Composition is skewed to low complexity over residues 269 to 279 (PSSPEEWPESP) and 302 to 314 (SPSA…SDVP). Basic and acidic residues predominate over residues 324-335 (GEKKEKAPERRV). Ser336 carries the phosphoserine modification. Residues 378 to 484 (GGVKNMLLEW…YIQELYRSLV (107 aa)) form the Calponin-homology (CH) domain. Positions 476-494 (IQELYRSLVQKGLVKTKKK) are calmodulin-binding.

The protein belongs to the smoothelin family. In terms of assembly, interacts with PPP1R12A. Maximal phosphorylation of Ser-336 correlates with maximal relaxation of aorta in response to acetylcholine. As to expression, expressed in striated muscles, specifically in type 2a fibers (at protein level).

The protein localises to the cytoplasm. Its subcellular location is the myofibril. It is found in the sarcomere. The protein resides in the i band. It localises to the m line. The protein localises to the nucleus. In terms of biological role, plays a role in the regulation of contractile properties of both striated and smooth muscles. When unphosphorylated, may inhibit myosin dephosphorylation. Phosphorylation at Ser-299 reduces this inhibitory activity. This Homo sapiens (Human) protein is Smoothelin-like protein 1 (SMTNL1).